A 178-amino-acid polypeptide reads, in one-letter code: Alkyl hydroperoxide reductase AhpD (178 aa).

Catalysis depends on cysteine 131, which acts as the Proton donor. Cysteine 131 and cysteine 134 are oxidised to a cystine. Cysteine 134 functions as the Cysteine sulfenic acid (-SOH) intermediate in the catalytic mechanism.

Belongs to the AhpD family. Homotrimer.

The catalysed reaction is N(6)-[(R)-dihydrolipoyl]-L-lysyl-[lipoyl-carrier protein] + a hydroperoxide = N(6)-[(R)-lipoyl]-L-lysyl-[lipoyl-carrier protein] + an alcohol + H2O. In terms of biological role, antioxidant protein with alkyl hydroperoxidase activity. Required for the reduction of the AhpC active site cysteine residues and for the regeneration of the AhpC enzyme activity. This Streptomyces coelicolor (strain ATCC BAA-471 / A3(2) / M145) protein is Alkyl hydroperoxide reductase AhpD.